Reading from the N-terminus, the 188-residue chain is ATP-dependent protease subunit HslV (188 aa).

T14 is a catalytic residue. Residues A173, C176, and T179 each contribute to the Na(+) site.

It belongs to the peptidase T1B family. HslV subfamily. As to quaternary structure, a double ring-shaped homohexamer of HslV is capped on each side by a ring-shaped HslU homohexamer. The assembly of the HslU/HslV complex is dependent on binding of ATP.

It is found in the cytoplasm. It carries out the reaction ATP-dependent cleavage of peptide bonds with broad specificity.. With respect to regulation, allosterically activated by HslU binding. In terms of biological role, protease subunit of a proteasome-like degradation complex believed to be a general protein degrading machinery. This is ATP-dependent protease subunit HslV from Caulobacter vibrioides (strain ATCC 19089 / CIP 103742 / CB 15) (Caulobacter crescentus).